The following is a 366-amino-acid chain: Mitogen-activated protein kinase p38a (366 aa).

One can recognise a Protein kinase domain in the interval 25–312; that stretch reads YQDLQPVGSG…AEEALSHPYL (288 aa). ATP-binding positions include 31–39 and K54; that span reads VGSGAYGQV. The Proton acceptor role is filled by D154. Residue T184 is modified to Phosphothreonine. The TXY signature appears at 184-186; the sequence is TGY. Phosphotyrosine is present on Y186.

Belongs to the protein kinase superfamily. CMGC Ser/Thr protein kinase family. MAP kinase subfamily. The cofactor is Mg(2+). Post-translationally, dually phosphorylated on Thr-184 and Tyr-186, which activates the enzyme.

It is found in the nucleus. It carries out the reaction L-seryl-[protein] + ATP = O-phospho-L-seryl-[protein] + ADP + H(+). The enzyme catalyses L-threonyl-[protein] + ATP = O-phospho-L-threonyl-[protein] + ADP + H(+). Its activity is regulated as follows. Activated by threonine and tyrosine phosphorylation by Mkk3 in response to environmental stress. In terms of biological role, kinase involved in a signal transduction pathway. May down-regulate insect immunity gene expression after prolonged infection. The chain is Mitogen-activated protein kinase p38a from Drosophila melanogaster (Fruit fly).